A 1165-amino-acid polypeptide reads, in one-letter code: DNA-directed RNA polymerase subunit beta (1165 aa).

It belongs to the RNA polymerase beta chain family. In terms of assembly, the RNAP catalytic core consists of 2 alpha, 1 beta, 1 beta' and 1 omega subunit. When a sigma factor is associated with the core the holoenzyme is formed, which can initiate transcription.

It catalyses the reaction RNA(n) + a ribonucleoside 5'-triphosphate = RNA(n+1) + diphosphate. DNA-dependent RNA polymerase catalyzes the transcription of DNA into RNA using the four ribonucleoside triphosphates as substrates. This Corynebacterium glutamicum (strain R) protein is DNA-directed RNA polymerase subunit beta.